The sequence spans 376 residues: Glutamate 5-kinase (376 aa).

Residue Lys15 participates in ATP binding. Positions 56, 143, and 155 each coordinate substrate. 175 to 176 (SD) provides a ligand contact to ATP. The PUA domain maps to 281–358 (KGTLTIDAGA…PDVMMILGIS (78 aa)).

This sequence belongs to the glutamate 5-kinase family.

The protein localises to the cytoplasm. It catalyses the reaction L-glutamate + ATP = L-glutamyl 5-phosphate + ADP. It functions in the pathway amino-acid biosynthesis; L-proline biosynthesis; L-glutamate 5-semialdehyde from L-glutamate: step 1/2. Its function is as follows. Catalyzes the transfer of a phosphate group to glutamate to form L-glutamate 5-phosphate. The protein is Glutamate 5-kinase of Rhodopseudomonas palustris (strain BisB5).